We begin with the raw amino-acid sequence, 334 residues long: MTIIVTGAAGFIGSNIVKALNQRGITDIVAVDNLSKGEKFKNLAECEIAHYLDKHEFIRQVREHILPYQNIEAVFHQGACSDTMNYDGLYMMDNNYQYTLDLLDWCQDERIPFLYASSAAVYGKGEIFREERELEKPLNVYGYSKFLFDQVLRRRMKEGLTAQVVGFRYFNVYGQHEQHKGRMASVAFHHFHQYREHGYVNLFGSNDGYGNGEQTRDFVSVEDVAKVNLYFFDHPELSGIYNLGTGRSQQFNELAAATVNACRAAEGKPEMSLKELVEEELIRYIPFPNALKGKYQSFTQADITKLREAGYKEEFFDVKAGIDRYVKWMLENLA.

NADP(+)-binding positions include 11-12, 32-33, lysine 39, lysine 54, 77-81, and asparagine 94; these read FI, DN, and QGACS. Tyrosine 141 functions as the Proton acceptor in the catalytic mechanism. Residue lysine 145 coordinates NADP(+). Substrate is bound at residue asparagine 171. Valine 172 and lysine 180 together coordinate NADP(+). Lysine 180 (proton acceptor) is an active-site residue. Residues arginine 182, histidine 189, 203 to 206, arginine 216, and tyrosine 295 each bind substrate; that span reads FGSN.

This sequence belongs to the NAD(P)-dependent epimerase/dehydratase family. HldD subfamily. As to quaternary structure, homopentamer. NADP(+) serves as cofactor.

It catalyses the reaction ADP-D-glycero-beta-D-manno-heptose = ADP-L-glycero-beta-D-manno-heptose. The protein operates within nucleotide-sugar biosynthesis; ADP-L-glycero-beta-D-manno-heptose biosynthesis; ADP-L-glycero-beta-D-manno-heptose from D-glycero-beta-D-manno-heptose 7-phosphate: step 4/4. It participates in bacterial outer membrane biogenesis; LOS core biosynthesis. Functionally, catalyzes the interconversion between ADP-D-glycero-beta-D-manno-heptose and ADP-L-glycero-beta-D-manno-heptose via an epimerization at carbon 6 of the heptose. This is ADP-L-glycero-D-manno-heptose-6-epimerase from Neisseria meningitidis serogroup A / serotype 4A (strain DSM 15465 / Z2491).